A 477-amino-acid polypeptide reads, in one-letter code: Chaperonin GroEL 2 (477 aa).

ATP contacts are provided by residues 29–32, 86–90, and G416; these read TLGP and DGTTT.

The protein belongs to the chaperonin (HSP60) family. As to quaternary structure, forms a cylinder of 14 subunits composed of two heptameric rings stacked back-to-back. Interacts with the co-chaperonin GroES.

Its subcellular location is the cytoplasm. It catalyses the reaction ATP + H2O + a folded polypeptide = ADP + phosphate + an unfolded polypeptide.. Together with its co-chaperonin GroES, plays an essential role in assisting protein folding. The GroEL-GroES system forms a nano-cage that allows encapsulation of the non-native substrate proteins and provides a physical environment optimized to promote and accelerate protein folding. This Streptomyces lividans protein is Chaperonin GroEL 2.